The chain runs to 171 residues: 3-hydroxydecanoyl-[acyl-carrier-protein] dehydratase (171 aa).

His70 is a catalytic residue.

It belongs to the thioester dehydratase family. FabA subfamily. In terms of assembly, homodimer.

The protein resides in the cytoplasm. The enzyme catalyses a (3R)-hydroxyacyl-[ACP] = a (2E)-enoyl-[ACP] + H2O. It catalyses the reaction (3R)-hydroxydecanoyl-[ACP] = (2E)-decenoyl-[ACP] + H2O. It carries out the reaction (2E)-decenoyl-[ACP] = (3Z)-decenoyl-[ACP]. It functions in the pathway lipid metabolism; fatty acid biosynthesis. Functionally, necessary for the introduction of cis unsaturation into fatty acids. Catalyzes the dehydration of (3R)-3-hydroxydecanoyl-ACP to E-(2)-decenoyl-ACP and then its isomerization to Z-(3)-decenoyl-ACP. Can catalyze the dehydratase reaction for beta-hydroxyacyl-ACPs with saturated chain lengths up to 16:0, being most active on intermediate chain length. In Chromohalobacter salexigens (strain ATCC BAA-138 / DSM 3043 / CIP 106854 / NCIMB 13768 / 1H11), this protein is 3-hydroxydecanoyl-[acyl-carrier-protein] dehydratase.